We begin with the raw amino-acid sequence, 201 residues long: Iron-sulfur flavoprotein AF_1896 (201 aa).

4 residues coordinate [4Fe-4S] cluster: Cys46, Cys49, Cys52, and Cys57.

Belongs to the SsuE family. Isf subfamily. As to quaternary structure, homodimer. It depends on FMN as a cofactor. The cofactor is [4Fe-4S] cluster.

In terms of biological role, redox-active protein probably involved in electron transport. This chain is Iron-sulfur flavoprotein AF_1896, found in Archaeoglobus fulgidus (strain ATCC 49558 / DSM 4304 / JCM 9628 / NBRC 100126 / VC-16).